We begin with the raw amino-acid sequence, 142 residues long: Large ribosomal subunit protein uL11 (142 aa).

Belongs to the universal ribosomal protein uL11 family. In terms of assembly, part of the ribosomal stalk of the 50S ribosomal subunit. Interacts with L10 and the large rRNA to form the base of the stalk. L10 forms an elongated spine to which L12 dimers bind in a sequential fashion forming a multimeric L10(L12)X complex. Post-translationally, one or more lysine residues are methylated.

In terms of biological role, forms part of the ribosomal stalk which helps the ribosome interact with GTP-bound translation factors. This chain is Large ribosomal subunit protein uL11, found in Bartonella quintana (strain Toulouse) (Rochalimaea quintana).